Here is a 763-residue protein sequence, read N- to C-terminus: Palmitoyltransferase AKR1 (763 aa).

The segment covering 1–15 (MEDNSEQASVSSQAS) has biased composition (polar residues). The interval 1 to 59 (MEDNSEQASVSSQASMRPLVSDNGDREAGAGVEVNIANDNDTSVGVDGENGNEDDDPIL) is disordered. The Cytoplasmic segment spans residues 1 to 307 (MEDNSEQASV…KLVKRDDHAK (307 aa)). ANK repeat units lie at residues 57 to 87 (PILS…NVSS), 92 to 121 (EGVT…NVES), 126 to 155 (LEAT…SATT), 159 to 188 (QGFN…SKGI), 197 to 226 (KGRT…SVKI), 230 to 259 (GGFT…DFFQ), and 292 to 322 (NGYP…GFAF). Residues 308-325 (IITFLIPLLVLGFAFFGF) form a helical membrane-spanning segment. Residues 326–330 (SHLHI) are Lumenal-facing. The chain crosses the membrane as a helical span at residues 331–348 (LFALPVIILLLLASNKFI). Residues 349-368 (KSFLLPSYETKGTNSASLLK) lie on the Cytoplasmic side of the membrane. A helical membrane pass occupies residues 369–389 (SPLIAGILFGSIFWLAFVWIL). At 390 to 401 (RILPYTFTKRPL) the chain is on the lumenal side. A helical membrane pass occupies residues 402–422 (GNLTFCAILCFVCYSLFLLAF). Over 423–497 (SDPGHIGSEN…YNDVGLKNHK (75 aa)) the chain is Cytoplasmic. The DHHC domain maps to 454–504 (SFCLETWVRKPLRSKYSYLNDALILRFDHYCPWIYNDVGLKNHKLFIFFIL). Catalysis depends on Cys-484, which acts as the S-palmitoyl cysteine intermediate. The chain crosses the membrane as a helical span at residues 498 to 518 (LFIFFILALELGIFSFVKVCL). Over 519–546 (KYFDELDMDGDCFILGDDDLCSGLIGDR) the chain is Lumenal. A helical membrane pass occupies residues 547–567 (FTFLIMTWACIQAVWIFSLVI). Topologically, residues 568–763 (VQLFQITKGL…DPLSEIDDMV (196 aa)) are cytoplasmic.

Belongs to the DHHC palmitoyltransferase family. AKR/ZDHHC17 subfamily.

It localises to the early endosome membrane. It is found in the golgi apparatus membrane. The catalysed reaction is L-cysteinyl-[protein] + hexadecanoyl-CoA = S-hexadecanoyl-L-cysteinyl-[protein] + CoA. In terms of biological role, palmitoyltransferase specific for casein kinase 1. In Candida glabrata (strain ATCC 2001 / BCRC 20586 / JCM 3761 / NBRC 0622 / NRRL Y-65 / CBS 138) (Yeast), this protein is Palmitoyltransferase AKR1 (AKR1).